The primary structure comprises 485 residues: Glutamyl-tRNA(Gln) amidotransferase subunit A (485 aa).

Residues Lys79 and Ser154 each act as charge relay system in the active site. Ser178 serves as the catalytic Acyl-ester intermediate.

Belongs to the amidase family. GatA subfamily. Heterotrimer of A, B and C subunits.

It carries out the reaction L-glutamyl-tRNA(Gln) + L-glutamine + ATP + H2O = L-glutaminyl-tRNA(Gln) + L-glutamate + ADP + phosphate + H(+). Its function is as follows. Allows the formation of correctly charged Gln-tRNA(Gln) through the transamidation of misacylated Glu-tRNA(Gln) in organisms which lack glutaminyl-tRNA synthetase. The reaction takes place in the presence of glutamine and ATP through an activated gamma-phospho-Glu-tRNA(Gln). The polypeptide is Glutamyl-tRNA(Gln) amidotransferase subunit A (Staphylococcus aureus (strain bovine RF122 / ET3-1)).